A 418-amino-acid chain; its full sequence is NADH-quinone oxidoreductase subunit D (418 aa).

Belongs to the complex I 49 kDa subunit family. NDH-1 is composed of 14 different subunits. Subunits NuoB, C, D, E, F, and G constitute the peripheral sector of the complex.

It is found in the cell inner membrane. The catalysed reaction is a quinone + NADH + 5 H(+)(in) = a quinol + NAD(+) + 4 H(+)(out). In terms of biological role, NDH-1 shuttles electrons from NADH, via FMN and iron-sulfur (Fe-S) centers, to quinones in the respiratory chain. The immediate electron acceptor for the enzyme in this species is believed to be ubiquinone. Couples the redox reaction to proton translocation (for every two electrons transferred, four hydrogen ions are translocated across the cytoplasmic membrane), and thus conserves the redox energy in a proton gradient. The chain is NADH-quinone oxidoreductase subunit D from Bordetella pertussis (strain Tohama I / ATCC BAA-589 / NCTC 13251).